Consider the following 186-residue polypeptide: Threonylcarbamoyl-AMP synthase (186 aa).

The region spanning 6 to 186 (GFRLRLAANA…FDAMSGRRIR (181 aa)) is the YrdC-like domain.

Belongs to the SUA5 family. TsaC subfamily.

The protein resides in the cytoplasm. The enzyme catalyses L-threonine + hydrogencarbonate + ATP = L-threonylcarbamoyladenylate + diphosphate + H2O. Required for the formation of a threonylcarbamoyl group on adenosine at position 37 (t(6)A37) in tRNAs that read codons beginning with adenine. Catalyzes the conversion of L-threonine, HCO(3)(-)/CO(2) and ATP to give threonylcarbamoyl-AMP (TC-AMP) as the acyladenylate intermediate, with the release of diphosphate. This is Threonylcarbamoyl-AMP synthase from Methylococcus capsulatus (strain ATCC 33009 / NCIMB 11132 / Bath).